We begin with the raw amino-acid sequence, 323 residues long: Lipoyl synthase (323 aa).

Positions 1–14 are enriched in basic and acidic residues; that stretch reads MVTILDRTKPDDKR. Positions 1–25 are disordered; the sequence is MVTILDRTKPDDKRIRHPEKAHKPD. [4Fe-4S] cluster is bound by residues cysteine 61, cysteine 66, cysteine 72, cysteine 87, cysteine 91, cysteine 94, and serine 300. The Radical SAM core domain occupies 73-289; the sequence is WEKKHATFMI…EDIAYTKGFL (217 aa).

The protein belongs to the radical SAM superfamily. Lipoyl synthase family. The cofactor is [4Fe-4S] cluster.

It is found in the cytoplasm. The catalysed reaction is [[Fe-S] cluster scaffold protein carrying a second [4Fe-4S](2+) cluster] + N(6)-octanoyl-L-lysyl-[protein] + 2 oxidized [2Fe-2S]-[ferredoxin] + 2 S-adenosyl-L-methionine + 4 H(+) = [[Fe-S] cluster scaffold protein] + N(6)-[(R)-dihydrolipoyl]-L-lysyl-[protein] + 4 Fe(3+) + 2 hydrogen sulfide + 2 5'-deoxyadenosine + 2 L-methionine + 2 reduced [2Fe-2S]-[ferredoxin]. Its pathway is protein modification; protein lipoylation via endogenous pathway; protein N(6)-(lipoyl)lysine from octanoyl-[acyl-carrier-protein]: step 2/2. In terms of biological role, catalyzes the radical-mediated insertion of two sulfur atoms into the C-6 and C-8 positions of the octanoyl moiety bound to the lipoyl domains of lipoate-dependent enzymes, thereby converting the octanoylated domains into lipoylated derivatives. This Allorhizobium ampelinum (strain ATCC BAA-846 / DSM 112012 / S4) (Agrobacterium vitis (strain S4)) protein is Lipoyl synthase.